Reading from the N-terminus, the 239-residue chain is Phosphothreonine lyase OspF (239 aa).

His104 functions as the Proton donor in the catalytic mechanism. The Proton acceptor role is filled by Lys134.

This sequence belongs to the phosphothreonine lyase family.

The protein resides in the secreted. In terms of biological role, catalyzes the removal of the phosphate group from the phosphothreonine in the mitogen-activated protein kinases p38, phosphothreonine in the mitogen-activated protein kinases such as MAPK2/ERK2, MAPK3/ERK1, MAPK8 and MAPK14 in an irreversible reaction, thus preventing the downstream phosphorylation of histone H3. This epigenetic modification results in inhibition of the transcription of a specific subset of pro-inflammatory genes, and ultimately to a reduced immune response against the invading pathogen. The diminished immune response enhances the bacterium's ability to disseminate and multiply within the host. This is Phosphothreonine lyase OspF (ospF) from Shigella boydii serotype 4 (strain Sb227).